The primary structure comprises 190 residues: MPVPSKERVTELISDLVQRQGYDVEDVAVTLAGKHSAVRIMVDSDAGLELDAVANLSHEISEVFDSVSDFGESPYTLEVTSPGIDRPLTHERHWRRARGRKARIDLAHETVVGRIGALDGDSVAVVIGSRTGPDVRRIALADIQKAVVQVEFSKPDPRELELAGGIPEGRVAPADADASEDEEVVEGLDK.

Residues 159–190 (ELELAGGIPEGRVAPADADASEDEEVVEGLDK) form a disordered region. A compositionally biased stretch (acidic residues) spans 177–190 (DASEDEEVVEGLDK).

Belongs to the RimP family.

It is found in the cytoplasm. Its function is as follows. Required for maturation of 30S ribosomal subunits. The protein is Ribosome maturation factor RimP of Rhodococcus opacus (strain B4).